A 291-amino-acid polypeptide reads, in one-letter code: Bifunctional protein FolD 1 (291 aa).

Residues 167–169 (GAS), I192, and I233 contribute to the NADP(+) site.

Belongs to the tetrahydrofolate dehydrogenase/cyclohydrolase family. As to quaternary structure, homodimer.

It carries out the reaction (6R)-5,10-methylene-5,6,7,8-tetrahydrofolate + NADP(+) = (6R)-5,10-methenyltetrahydrofolate + NADPH. The catalysed reaction is (6R)-5,10-methenyltetrahydrofolate + H2O = (6R)-10-formyltetrahydrofolate + H(+). Its pathway is one-carbon metabolism; tetrahydrofolate interconversion. Its function is as follows. Catalyzes the oxidation of 5,10-methylenetetrahydrofolate to 5,10-methenyltetrahydrofolate and then the hydrolysis of 5,10-methenyltetrahydrofolate to 10-formyltetrahydrofolate. The sequence is that of Bifunctional protein FolD 1 from Pseudomonas putida (strain ATCC 47054 / DSM 6125 / CFBP 8728 / NCIMB 11950 / KT2440).